Here is a 214-residue protein sequence, read N- to C-terminus: 7-cyano-7-deazaguanine synthase (214 aa).

Residue 10-20 (FSGGQDSTTCL) participates in ATP binding. Zn(2+)-binding residues include Cys-184, Cys-193, Cys-196, and Cys-199.

This sequence belongs to the QueC family. Homodimer. Zn(2+) serves as cofactor.

The catalysed reaction is 7-carboxy-7-deazaguanine + NH4(+) + ATP = 7-cyano-7-deazaguanine + ADP + phosphate + H2O + H(+). It functions in the pathway purine metabolism; 7-cyano-7-deazaguanine biosynthesis. Functionally, catalyzes the ATP-dependent conversion of 7-carboxy-7-deazaguanine (CDG) to 7-cyano-7-deazaguanine (preQ(0)). This Exiguobacterium sp. (strain ATCC BAA-1283 / AT1b) protein is 7-cyano-7-deazaguanine synthase.